The sequence spans 1302 residues: Phosphoribosylformylglycinamidine synthase (1302 aa).

Residues 307-318 (GASTGSGGEIRD) and Ala678 contribute to the ATP site. Residues Glu718, Asn722, and Asp891 each coordinate Mg(2+). The 254-residue stretch at 1049–1302 (MAILREQGVN…MFQNARKNIG (254 aa)) folds into the Glutamine amidotransferase type-1 domain. The Nucleophile role is filled by Cys1142. Active-site residues include His1267 and Glu1269.

This sequence in the N-terminal section; belongs to the FGAMS family. Monomer.

It is found in the cytoplasm. The enzyme catalyses N(2)-formyl-N(1)-(5-phospho-beta-D-ribosyl)glycinamide + L-glutamine + ATP + H2O = 2-formamido-N(1)-(5-O-phospho-beta-D-ribosyl)acetamidine + L-glutamate + ADP + phosphate + H(+). It participates in purine metabolism; IMP biosynthesis via de novo pathway; 5-amino-1-(5-phospho-D-ribosyl)imidazole from N(2)-formyl-N(1)-(5-phospho-D-ribosyl)glycinamide: step 1/2. In terms of biological role, phosphoribosylformylglycinamidine synthase involved in the purines biosynthetic pathway. Catalyzes the ATP-dependent conversion of formylglycinamide ribonucleotide (FGAR) and glutamine to yield formylglycinamidine ribonucleotide (FGAM) and glutamate. The chain is Phosphoribosylformylglycinamidine synthase from Vibrio parahaemolyticus serotype O3:K6 (strain RIMD 2210633).